We begin with the raw amino-acid sequence, 78 residues long: Small ribosomal subunit protein bS18 (78 aa).

This sequence belongs to the bacterial ribosomal protein bS18 family. In terms of assembly, part of the 30S ribosomal subunit. Forms a tight heterodimer with protein bS6.

Functionally, binds as a heterodimer with protein bS6 to the central domain of the 16S rRNA, where it helps stabilize the platform of the 30S subunit. The protein is Small ribosomal subunit protein bS18 of Clostridium novyi (strain NT).